A 1192-amino-acid polypeptide reads, in one-letter code: Probable phospholipid-transporting ATPase IM (1192 aa).

The Cytoplasmic segment spans residues 1-44 (MFCSEKKLREVERIVKANDREYNEKFQYADNRIHTSKYNILTFL). Residues 45–66 (PINLFEQFQRVANAYFLCLLIL) traverse the membrane as a helical segment. At 67–72 (QLIPEI) the chain is on the exoplasmic loop side. A helical transmembrane segment spans residues 73-92 (SSLTWFTTIVPLVLVITMTA). The Cytoplasmic portion of the chain corresponds to 93-276 (VKDATDDYFR…TSIDRLMNTL (184 aa)). Residues 277 to 298 (VLWIFGFLICLGIILAIGNSIW) form a helical membrane-spanning segment. Residues 299-327 (ESQTGDQFRTFLFWNEGEKSSVFSGFLTF) are Exoplasmic loop-facing. Residues 328–349 (WSYIIILNTVVPISLYVSVEVI) traverse the membrane as a helical segment. At 350–871 (RLGHSYFINW…GRWSYFRMCK (522 aa)) the chain is on the cytoplasmic side. Catalysis depends on Asp392, which acts as the 4-aspartylphosphate intermediate. ATP contacts are provided by Asp392, Lys393, Thr394, Glu496, Phe537, Lys560, Arg594, Thr674, Gly675, Asp676, Arg789, and Lys795. Residue Asp392 participates in Mg(2+) binding. Residue Thr394 participates in Mg(2+) binding. Residue Asp815 coordinates Mg(2+). Positions 818 and 819 each coordinate ATP. Asp819 is a binding site for Mg(2+). Residues 872–892 (FLCYFFYKNFAFTLVHFWFGF) traverse the membrane as a helical segment. The Exoplasmic loop segment spans residues 893-904 (FCGFSAQTVYDQ). A helical membrane pass occupies residues 905–924 (WFITLFNIVYTSLPVLAMGI). The Cytoplasmic segment spans residues 925 to 954 (FDQDVSDQNSVDCPQLYKPGQLNLLFNKRK). The chain crosses the membrane as a helical span at residues 955–976 (FFICVLHGIYTSLVLFFIPYGA). The Exoplasmic loop portion of the chain corresponds to 977–990 (FYNVAGEDGQHIAD). A helical transmembrane segment spans residues 991–1013 (YQSFAVTMATSLVIVVSVQIALD). Topologically, residues 1014-1019 (TSYWTF) are cytoplasmic. A helical membrane pass occupies residues 1020–1040 (INHVFIWGSIAIYFSILFTMH). The Exoplasmic loop portion of the chain corresponds to 1041–1060 (SNGIFGIFPNQFPFVGNARH). The chain crosses the membrane as a helical span at residues 1061–1085 (SLTQKCIWLVILLTTVASVMPVVAF). Residues 1086–1192 (RFLKVDLYPT…SFSQDKTVKL (107 aa)) are Cytoplasmic-facing. The span at 1104 to 1125 (QKAQKKARPPSSRRPRTRRSSS) shows a compositional bias: basic residues. Disordered stretches follow at residues 1104–1130 (QKAQ…RSGY) and 1143–1163 (TSGK…EKTH).

Belongs to the cation transport ATPase (P-type) (TC 3.A.3) family. Type IV subfamily. Component of a P4-ATPase flippase complex which consists of a catalytic alpha subunit and an accessory beta subunit. Interacts with beta subunits TMEM30A and TMEM30B. Requires Mg(2+) as cofactor. Ubiquitously expressed at moderate levels.

The protein localises to the cell membrane. It localises to the golgi apparatus. The catalysed reaction is ATP + H2O + phospholipidSide 1 = ADP + phosphate + phospholipidSide 2.. Its function is as follows. Component of a P4-ATPase flippase complex which catalyzes the hydrolysis of ATP coupled to the transport of aminophospholipids from the outer to the inner leaflet of various membranes and ensures the maintenance of asymmetric distribution of phospholipids. Phospholipid translocation also seems to be implicated in vesicle formation and in uptake of lipid signaling molecules. The sequence is that of Probable phospholipid-transporting ATPase IM (ATP8B4) from Homo sapiens (Human).